The sequence spans 416 residues: Zinc finger protein 92 homolog (416 aa).

The 72-residue stretch at 14-85 (VSFEDVSVYF…DIPRTWATAG (72 aa)) folds into the KRAB domain. The tract at residues 86–125 (LHIGDRTQSKTSTSTQKHSGRQLPGADPQGGKEGQAARSS) is disordered. 8 C2H2-type zinc fingers span residues 152–174 (YLCQ…RIIH), 180–202 (YACP…QRIH), 208–230 (YACP…QVIH), 236–258 (FACG…ARVH), 264–286 (YACP…QRTH), 292–314 (YACG…QRSH), 320–342 (FACR…RRVH), and 348–370 (YECS…QAVH). The interval 368-416 (AVHGARRPAKAETARRLAGPGSTGPGSAVAATSPPRPSTAARPSRPSRR) is disordered. Residues 394–416 (SAVAATSPPRPSTAARPSRPSRR) show a composition bias toward low complexity.

This sequence belongs to the krueppel C2H2-type zinc-finger protein family.

Its subcellular location is the nucleus. Functionally, KRAB domain-containing zinc-finger protein that represses B1/Alu SINE transposable elements and modulates the transcription of nearby genes in a tissue-specific manner. It regulates glucose homeostasis and lipid metabolism by modulating the expression of the endocrine cell-defining transcription factor, MAFB, in pancreatic islets and, the fat metabolism regulator, ACACB, in adipose tissue and muscle. The protein is Zinc finger protein 92 homolog (ZFP92) of Homo sapiens (Human).